An 837-amino-acid chain; its full sequence is Tuftelin-interacting protein 11 (837 aa).

Composition is skewed to basic and acidic residues over residues 1–13 and 44–64; these read MSLS…GEGH and QTKE…EERP. Disordered regions lie at residues 1–21, 34–73, and 85–135; these read MSLS…DDER, EFNP…RARD, and LKKG…FAGG. Positions 1 to 50 are required for interaction with DHX15; sequence MSLSHLYRDGEGHLDDDDDERENFEITDWDLQNEFNPNRQRHWQTKEEAT. Phosphoserine is present on residues Ser2, Ser59, Ser95, and Ser98. The segment covering 91 to 100 has biased composition (acidic residues); it reads EEADSEDSDA. Residues 101–116 show a composition bias toward basic and acidic residues; that stretch reads EEKPVKQEDFPKDLGP. Ser144 is modified (phosphoserine). Residues 149–195 enclose the G-patch domain; that stretch reads TKGIGQKLLQKMGYVPGRGLGKNAQGIINPIEAKQRKGKGAVGAYGS. The disordered stretch occupies residues 183–236; that stretch reads QRKGKGAVGAYGSERTTQSLQDFPVADSEEEAEEEFQKELSQWRKDPSGSKKKP. At Ser210 the chain carries Phosphoserine. Over residues 217–231 the composition is skewed to basic and acidic residues; sequence EFQKELSQWRKDPSG. A Nuclear localization signal motif is present at residues 700–705; it reads VKDKFN. A required for nuclear speckle localization region spans residues 710-734; the sequence is IMNRAVSSNVGAYMQPGARENIAYL.

Belongs to the TFP11/STIP family. As to quaternary structure, identified in the spliceosome C complex. Found in the Intron Large (IL) complex, a post-mRNA release spliceosomal complex containing the excised intron, U2, U5 and U6 snRNPs, and splicing factors. Interacts with TUFT1. Interacts with DHX15; indicative for a recruitment of DHX15 to the IL complex. Interacts with GCFC2.

It localises to the cytoplasm. The protein resides in the nucleus. Its function is as follows. Involved in pre-mRNA splicing, specifically in spliceosome disassembly during late-stage splicing events. Intron turnover seems to proceed through reactions in two lariat-intron associated complexes termed Intron Large (IL) and Intron Small (IS). In cooperation with DHX15 seems to mediate the transition of the U2, U5 and U6 snRNP-containing IL complex to the snRNP-free IS complex leading to efficient debranching and turnover of excised introns. May play a role in the differentiation of ameloblasts and odontoblasts or in the forming of the enamel extracellular matrix. This is Tuftelin-interacting protein 11 (Tfip11) from Rattus norvegicus (Rat).